We begin with the raw amino-acid sequence, 62 residues long: Photosystem II reaction center protein H (62 aa).

Residues 30 to 50 (PVMAGIGFMLLIFLVTILQIY) form a helical membrane-spanning segment.

Belongs to the PsbH family. PSII is composed of 1 copy each of membrane proteins PsbA, PsbB, PsbC, PsbD, PsbE, PsbF, PsbH, PsbI, PsbJ, PsbK, PsbL, PsbM, PsbT, PsbX, PsbY, Psb30/Ycf12, peripheral proteins PsbO, CyanoQ (PsbQ), PsbU, PsbV and a large number of cofactors. It forms dimeric complexes.

Its subcellular location is the cellular thylakoid membrane. Its function is as follows. One of the components of the core complex of photosystem II (PSII), required for its stability and/or assembly. PSII is a light-driven water:plastoquinone oxidoreductase that uses light energy to abstract electrons from H(2)O, generating O(2) and a proton gradient subsequently used for ATP formation. It consists of a core antenna complex that captures photons, and an electron transfer chain that converts photonic excitation into a charge separation. The chain is Photosystem II reaction center protein H from Prochlorococcus marinus (strain MIT 9303).